The primary structure comprises 417 residues: Serine hydroxymethyltransferase (417 aa).

Residues Leu121 and 125 to 127 each bind (6S)-5,6,7,8-tetrahydrofolate; that span reads GHL. N6-(pyridoxal phosphate)lysine is present on Lys229. A (6S)-5,6,7,8-tetrahydrofolate-binding site is contributed by 355–357; it reads SPF.

Belongs to the SHMT family. In terms of assembly, homodimer. It depends on pyridoxal 5'-phosphate as a cofactor.

The protein localises to the cytoplasm. It carries out the reaction (6R)-5,10-methylene-5,6,7,8-tetrahydrofolate + glycine + H2O = (6S)-5,6,7,8-tetrahydrofolate + L-serine. Its pathway is one-carbon metabolism; tetrahydrofolate interconversion. It participates in amino-acid biosynthesis; glycine biosynthesis; glycine from L-serine: step 1/1. Its function is as follows. Catalyzes the reversible interconversion of serine and glycine with tetrahydrofolate (THF) serving as the one-carbon carrier. This reaction serves as the major source of one-carbon groups required for the biosynthesis of purines, thymidylate, methionine, and other important biomolecules. Also exhibits THF-independent aldolase activity toward beta-hydroxyamino acids, producing glycine and aldehydes, via a retro-aldol mechanism. This Shewanella sp. (strain W3-18-1) protein is Serine hydroxymethyltransferase.